Consider the following 237-residue polypeptide: Small ribosomal subunit protein uS17m (237 aa).

This sequence belongs to the universal ribosomal protein uS17 family. In terms of assembly, component of the mitochondrial small ribosomal subunit (mt-SSU). Mature yeast 74S mitochondrial ribosomes consist of a small (37S) and a large (54S) subunit. The 37S small subunit contains a 15S ribosomal RNA (15S mt-rRNA) and 34 different proteins. The 54S large subunit contains a 21S rRNA (21S mt-rRNA) and 46 different proteins.

The protein localises to the mitochondrion. In terms of biological role, component of the mitochondrial ribosome (mitoribosome), a dedicated translation machinery responsible for the synthesis of mitochondrial genome-encoded proteins, including at least some of the essential transmembrane subunits of the mitochondrial respiratory chain. The mitoribosomes are attached to the mitochondrial inner membrane and translation products are cotranslationally integrated into the membrane. uS17m may have a meiosis-specific role as it accumulates during the middle stage of sporulation. In Saccharomyces cerevisiae (strain ATCC 204508 / S288c) (Baker's yeast), this protein is Small ribosomal subunit protein uS17m (MRPS17).